Here is a 962-residue protein sequence, read N- to C-terminus: Glycine dehydrogenase (decarboxylating) (962 aa).

At Lys710 the chain carries N6-(pyridoxal phosphate)lysine.

It belongs to the GcvP family. As to quaternary structure, the glycine cleavage system is composed of four proteins: P, T, L and H. Pyridoxal 5'-phosphate serves as cofactor.

The catalysed reaction is N(6)-[(R)-lipoyl]-L-lysyl-[glycine-cleavage complex H protein] + glycine + H(+) = N(6)-[(R)-S(8)-aminomethyldihydrolipoyl]-L-lysyl-[glycine-cleavage complex H protein] + CO2. The glycine cleavage system catalyzes the degradation of glycine. The P protein binds the alpha-amino group of glycine through its pyridoxal phosphate cofactor; CO(2) is released and the remaining methylamine moiety is then transferred to the lipoamide cofactor of the H protein. The sequence is that of Glycine dehydrogenase (decarboxylating) from Idiomarina loihiensis (strain ATCC BAA-735 / DSM 15497 / L2-TR).